The primary structure comprises 76 residues: Vasotab-TY3 (76 aa).

A signal peptide spans 1–21 (MKFALFSVLVLMLIATFVAAD). Positions 22–76 (DCPRICTSDYTPVCGTPSGGRRSANRTFANQCGLDSHNCLNKGDTYDKLHDGECK) constitute a Kazal-like domain. Intrachain disulfides connect Cys23-Cys60, Cys27-Cys53, and Cys35-Cys75.

Expressed by the salivary gland.

Its subcellular location is the secreted. Functionally, vasodilator protein that inhibits vasoconstriction of isolated rat femoral artery induced by phenylephrine. Since platelet aggregation and vasoconstriction are key hemostatic responses, particularly in small wounds, this protein likely participates in the antihemostatic responses during blood feeding. Blocks L-type calcium channels (Cav1/CACNA1) in left ventricular myocytes isolated from rat hearts. The chain is Vasotab-TY3 from Tabanus yao (Horsefly).